The primary structure comprises 141 residues: Nucleoside diphosphate kinase (141 aa).

Residues K11, F59, R87, T93, R104, and N114 each coordinate ATP. H117 functions as the Pros-phosphohistidine intermediate in the catalytic mechanism.

This sequence belongs to the NDK family. Homotetramer. Mg(2+) serves as cofactor.

It is found in the cytoplasm. The catalysed reaction is a 2'-deoxyribonucleoside 5'-diphosphate + ATP = a 2'-deoxyribonucleoside 5'-triphosphate + ADP. The enzyme catalyses a ribonucleoside 5'-diphosphate + ATP = a ribonucleoside 5'-triphosphate + ADP. Its function is as follows. Major role in the synthesis of nucleoside triphosphates other than ATP. The ATP gamma phosphate is transferred to the NDP beta phosphate via a ping-pong mechanism, using a phosphorylated active-site intermediate. This chain is Nucleoside diphosphate kinase, found in Vibrio campbellii (strain ATCC BAA-1116).